Here is a 369-residue protein sequence, read N- to C-terminus: C-C chemokine receptor type 9 (369 aa).

Topologically, residues 1-48 (MMPTELTSLIPGMFDDFSYDSTASTDDYMNLNFSSFFCKKNNVRQFAS) are extracellular. Asn-32 carries N-linked (GlcNAc...) asparagine glycosylation. Disulfide bonds link Cys-38/Cys-289 and Cys-119/Cys-198. A helical transmembrane segment spans residues 49–74 (HFLPPLYWLVFIVGTLGNSLVILVYW). Over 75–85 (YCTRVKTMTDM) the chain is Cytoplasmic. Residues 86–109 (FLLNLAIADLLFLATLPFWAIAAA) traverse the membrane as a helical segment. Over 110–120 (GQWMFQTFMCK) the chain is Extracellular. A helical transmembrane segment spans residues 121 to 150 (VVNSMYKMNFYSCVLLIMCISVDRYIAIVQ). Over 151 to 159 (AMKAQVWRQ) the chain is Cytoplasmic. A helical transmembrane segment spans residues 160-185 (KRLLYSKMVCITIWVMAAVLCTPEIL). Over 186-208 (YSQVSGESGIATCTMVYPKDKNA) the chain is Extracellular. Residues 209 to 243 (KLKSAVLILKVTLGFFLPFMVMAFCYTIIIHTLVQ) form a helical membrane-spanning segment. The Cytoplasmic portion of the chain corresponds to 244–248 (AKKSS). A helical membrane pass occupies residues 249–283 (KHKALKVTITVLTVFIMSQFPYNSILVVQAVDAYA). At 284–290 (MFISNCT) the chain is on the extracellular side. The helical transmembrane segment at 291-321 (ISTNIDICFQVTQTIAFFHSCLNPVLYVFVG) threads the bilayer. Over 322–369 (ERFRRDLVKTLKNLGCISQAQWVSFTRREGSLKLSSMLLETTSGALSL) the chain is Cytoplasmic.

Belongs to the G-protein coupled receptor 1 family. Highly expressed in the thymus and low in lymph nodes and spleen.

The protein localises to the cell membrane. Its function is as follows. Receptor for chemokine SCYA25/TECK. Subsequently transduces a signal by increasing the intracellular calcium ions level. The protein is C-C chemokine receptor type 9 (Ccr9) of Mus musculus (Mouse).